The sequence spans 211 residues: ATP phosphoribosyltransferase (211 aa).

The protein belongs to the ATP phosphoribosyltransferase family. Short subfamily. As to quaternary structure, heteromultimer composed of HisG and HisZ subunits.

The protein localises to the cytoplasm. The catalysed reaction is 1-(5-phospho-beta-D-ribosyl)-ATP + diphosphate = 5-phospho-alpha-D-ribose 1-diphosphate + ATP. Its pathway is amino-acid biosynthesis; L-histidine biosynthesis; L-histidine from 5-phospho-alpha-D-ribose 1-diphosphate: step 1/9. Functionally, catalyzes the condensation of ATP and 5-phosphoribose 1-diphosphate to form N'-(5'-phosphoribosyl)-ATP (PR-ATP). Has a crucial role in the pathway because the rate of histidine biosynthesis seems to be controlled primarily by regulation of HisG enzymatic activity. The protein is ATP phosphoribosyltransferase of Bacillus thuringiensis subsp. konkukian (strain 97-27).